The primary structure comprises 307 residues: Peroxisomal protein PEX21 (307 aa).

Cys4 is covalently cross-linked (Glycyl cysteine thioester (Cys-Gly) (interchain with G-Cter in ubiquitin)). Positions 23 to 52 (VGRVGGFNRPSGGLGQSSAEQQLQARAGER) are disordered.

Belongs to the peroxin-21 family. As to quaternary structure, interacts with PEX7. In terms of processing, monoubiquitinated at Cys-4; acts as a signal for PEX21 extraction and is required for proper export from peroxisomes and recycling.

The protein localises to the cytoplasm. The protein resides in the cytosol. It is found in the peroxisome. In terms of biological role, mediates peroxisomal import of proteins containing a C-terminal PTS2-type peroxisomal targeting signal via its interaction with PEX7. Interaction with PEX7 only takes place when PEX7 is associated with cargo proteins containing a PTS2 peroxisomal targeting signal. PEX7 along with PTS2-containing cargo proteins are then translocated through the PEX13-PEX14 docking complex together with PEX21. The sequence is that of Peroxisomal protein PEX21 (PEX21) from Eremothecium gossypii (strain ATCC 10895 / CBS 109.51 / FGSC 9923 / NRRL Y-1056) (Yeast).